A 476-amino-acid chain; its full sequence is Protein transport protein Sec61 subunit alpha (476 aa).

Residues 2 to 33 (GIKFLEVIKPFCAVLPEIQKPERKIQFREKVL) are Cytoplasmic-facing. A helical transmembrane segment spans residues 34 to 53 (WTAITLFIFLVCCQIPLFGI). Residues 54–76 (MSSDSADPFYWMRVILASNRGTL) lie on the Lumenal side of the membrane. Residues 77–96 (MELGISPIVTSGLIMQLLAG) form a helical membrane-spanning segment. Topologically, residues 97–117 (AKIIGVGDTPKDRALFNGAQK) are cytoplasmic. The helical transmembrane segment at 118 to 138 (LFGMIITIGQAIVYVMTGMYG) threads the bilayer. Residues 139–144 (DPSEMG) lie on the Lumenal side of the membrane. Residues 145–165 (AGICLLIIIQLFVAGLIVLLL) traverse the membrane as a helical segment. Residues 166-172 (DELLQKG) are Cytoplasmic-facing. A helical transmembrane segment spans residues 173-193 (YGLGSGISLFIATNICETIVW). Topologically, residues 194–240 (KAFSPTTVNTGRGTEFEGAIIALFHLLATRTDKVRALREGFYRQNLP) are lumenal. The helical transmembrane segment at 241–261 (NLMNLIATVFVFAVVIYFQGF) threads the bilayer. The Cytoplasmic portion of the chain corresponds to 262-288 (RVDLPIKSARYRGQYNTYPIKLFYTSN). The helical transmembrane segment at 289 to 309 (IPIILQSALVSNLYVISQMLS) threads the bilayer. Topologically, residues 310 to 354 (TRFSGNFLVNLLGTWSDATSGGPARAYPVAGLCYYLSPPESFGSV) are lumenal. A helical membrane pass occupies residues 355–375 (LDDPVHAGIYIVFMLGSCAFF). Over 376-420 (SKTWIEVSGSSAKDVAKQLKEQQMVMRGHRETSMVHELNRYIPTA) the chain is Cytoplasmic. Residues 421–441 (AAFGGLCIGGLSVMADFLGAI) form a helical membrane-spanning segment. The Lumenal segment spans residues 442–445 (GSGT). A helical transmembrane segment spans residues 446 to 462 (GILLAVTIIYQYFEIFV). The Cytoplasmic portion of the chain corresponds to 463-476 (KEQSEVGSMGALLF).

Belongs to the SecY/SEC61-alpha family. The SEC61 channel-forming translocon complex consists of channel-forming core components SEC61A1, SEC61B and SEC61G and different auxiliary components such as SEC62 and SEC63. The SEC61 channel associates with the multi-pass translocon (MPT) complex.

The protein resides in the endoplasmic reticulum membrane. Component of SEC61 channel-forming translocon complex that mediates transport of signal peptide-containing precursor polypeptides across the endoplasmic reticulum (ER). Forms a ribosome receptor and a gated pore in the ER membrane, both functions required for cotranslational translocation of nascent polypeptides. May cooperate with auxiliary protein SEC62, SEC63 and HSPA5/BiP to enable post-translational transport of small presecretory proteins. The SEC61 channel is also involved in ER membrane insertion of transmembrane proteins: it mediates membrane insertion of the first few transmembrane segments of proteins, while insertion of subsequent transmembrane regions of multi-pass membrane proteins is mediated by the multi-pass translocon (MPT) complex. In Hemitripterus americanus (Sea raven), this protein is Protein transport protein Sec61 subunit alpha (sec61a).